A 440-amino-acid chain; its full sequence is Diels-Alderase mycB (440 aa).

A signal peptide spans 1 to 18; that stretch reads MGYLVKLACGLLLPLATA. N-linked (GlcNAc...) asparagine glycosylation is found at Asn80, Asn155, and Asn332.

It belongs to the Diels-Alderase family.

The catalysed reaction is (5S)-5-(2-methylpropyl)-3-[(2E,6R,8E,10E,12E)-6,8,10,12-tetramethyltetradeca-2,8,10,12-tetraenoyl]-2,5-dihydro-1H-pyrrol-2-one = (5S)-3-[(1S,2R,4aR,6R,8aS)-2-(but-2-en-2-yl)-3,4a,6-trimethyl-1,2,4a,5,6,7,8,8a-octahydronaphthalene-1-carbonyl]-5-(2-methylpropyl)-2,5-dihydro-1H-pyrrol-2-one. The enzyme catalyses (5Z)-5-(2-methylpropylidene)-3-[(2E,6R,8E,10E,12E)-6,8,10,12-tetramethyltetradeca-2,8,10,12-tetraenoyl]-2,5-dihydro-1H-pyrrol-2-one = myceliothermophin E. It functions in the pathway mycotoxin biosynthesis. Diels-Alderase; part of the gene cluster that mediates the biosynthesis of myceliothermophins, mycotoxins that contain a trans-fused decalin ring system connected to a conjugated 3-pyrrolin-2-one moiety and that have potential anti-tumor properties. The polyketide synthase module (PKS) of the PKS-NRPS mycA is responsible for the synthesis of the octaketide backbone. The downstream nonribosomal peptide synthetase (NRPS) module then amidates the carboxyl end of the octaketide with a leucine. A reductase-like domain (R) at the C-terminus catalyzes the reductive release of the polyketide-amino acid intermediate. Because mycA lacks a designated enoylreductase (ER) domain, the required activity is provided the enoyl reductase mycC. Following mycA-catalyzed construction and release of aminoacyl polyketide aldehyde, Knoevenagel condensation yields the expected ketone. This C18 keto acyclic precursor is the substrate of the Diels-Alderase mycB, that catalyzes the Diels-Alder cycloaddition to produce myceliothermophin E. A yet unknown oxygenase involved in the production of myceliothermophin A, via substitution with a hydroxyl group at the C21, has still to be identified. The protein is Diels-Alderase mycB of Thermothelomyces thermophilus (strain ATCC 42464 / BCRC 31852 / DSM 1799) (Sporotrichum thermophile).